A 523-amino-acid polypeptide reads, in one-letter code: UDP-glucuronosyltransferase 3A2 (523 aa).

An N-terminal signal peptide occupies residues 1–22 (MAGQRVLLLVGFLLPGVLLSEA). Over 23–483 (AKILTISTVG…YVFQQPWHEQ (461 aa)) the chain is Extracellular. N-linked (GlcNAc...) asparagine glycosylation occurs at Asn-52. Residues 484-504 (YLLDVFVFLLGLTLGTLWLCG) traverse the membrane as a helical segment. At 505-523 (KLLGMAVWWLRGARKVKET) the chain is on the cytoplasmic side.

Belongs to the UDP-glycosyltransferase family.

Its subcellular location is the membrane. The catalysed reaction is glucuronate acceptor + UDP-alpha-D-glucuronate = acceptor beta-D-glucuronoside + UDP + H(+). Its function is as follows. UDP-glucuronosyltransferases catalyze phase II biotransformation reactions in which lipophilic substrates are conjugated with glucuronic acid to increase water solubility and enhance excretion. They are of major importance in the conjugation and subsequent elimination of potentially toxic xenobiotics and endogenous compounds. The protein is UDP-glucuronosyltransferase 3A2 (UGT3A2) of Homo sapiens (Human).